A 406-amino-acid polypeptide reads, in one-letter code: ATP phosphoribosyltransferase regulatory subunit (406 aa).

The protein belongs to the class-II aminoacyl-tRNA synthetase family. HisZ subfamily. As to quaternary structure, heteromultimer composed of HisG and HisZ subunits.

The protein localises to the cytoplasm. The protein operates within amino-acid biosynthesis; L-histidine biosynthesis; L-histidine from 5-phospho-alpha-D-ribose 1-diphosphate: step 1/9. Its function is as follows. Required for the first step of histidine biosynthesis. May allow the feedback regulation of ATP phosphoribosyltransferase activity by histidine. The sequence is that of ATP phosphoribosyltransferase regulatory subunit from Methylococcus capsulatus (strain ATCC 33009 / NCIMB 11132 / Bath).